The chain runs to 231 residues: Uracil phosphoribosyltransferase (231 aa).

A GTP-binding site is contributed by 38 to 42 (KGLVR). Residues arginine 87, arginine 112, and 140 to 148 (DPMIATGST) contribute to the 5-phospho-alpha-D-ribose 1-diphosphate site. Uracil is bound by residues isoleucine 203 and 208-210 (GDA). Aspartate 209 serves as a coordination point for 5-phospho-alpha-D-ribose 1-diphosphate.

The protein belongs to the UPRTase family. The cofactor is Mg(2+).

The enzyme catalyses UMP + diphosphate = 5-phospho-alpha-D-ribose 1-diphosphate + uracil. Its pathway is pyrimidine metabolism; UMP biosynthesis via salvage pathway; UMP from uracil: step 1/1. With respect to regulation, allosterically activated by GTP. Catalyzes the conversion of uracil and 5-phospho-alpha-D-ribose 1-diphosphate (PRPP) to UMP and diphosphate. This is Uracil phosphoribosyltransferase from Methanococcus maripaludis (strain C6 / ATCC BAA-1332).